Consider the following 246-residue polypeptide: 3-deoxy-manno-octulosonate cytidylyltransferase (246 aa).

The protein belongs to the KdsB family.

The protein localises to the cytoplasm. It catalyses the reaction 3-deoxy-alpha-D-manno-oct-2-ulosonate + CTP = CMP-3-deoxy-beta-D-manno-octulosonate + diphosphate. The protein operates within nucleotide-sugar biosynthesis; CMP-3-deoxy-D-manno-octulosonate biosynthesis; CMP-3-deoxy-D-manno-octulosonate from 3-deoxy-D-manno-octulosonate and CTP: step 1/1. It functions in the pathway bacterial outer membrane biogenesis; lipopolysaccharide biosynthesis. Activates KDO (a required 8-carbon sugar) for incorporation into bacterial lipopolysaccharide in Gram-negative bacteria. The protein is 3-deoxy-manno-octulosonate cytidylyltransferase of Rickettsia conorii (strain ATCC VR-613 / Malish 7).